Reading from the N-terminus, the 478-residue chain is JmjC domain-containing histone demethylation protein 1 (478 aa).

The PHD-type zinc finger occupies 5 to 68; the sequence is SESCPLCKVH…IYHCPECVPK (64 aa). The JmjC domain occupies 217–383; it reads SDVAKLGVDF…MQLKINEIER (167 aa). A substrate-binding site is contributed by T266. Positions 269 and 271 each coordinate Fe cation. K286 provides a ligand contact to substrate. A Fe cation-binding site is contributed by H351.

The protein belongs to the JHDM1 histone demethylase family. Requires Fe(2+) as cofactor.

Its subcellular location is the nucleus. The enzyme catalyses N(6),N(6)-dimethyl-L-lysyl(36)-[histone H3] + 2 2-oxoglutarate + 2 O2 = L-lysyl(36)-[histone H3] + 2 formaldehyde + 2 succinate + 2 CO2. Histone demethylase that specifically demethylates 'Lys-36' of histone H3, thereby playing a central role in histone code. This chain is JmjC domain-containing histone demethylation protein 1 (JHD1), found in Candida albicans (strain SC5314 / ATCC MYA-2876) (Yeast).